Here is a 436-residue protein sequence, read N- to C-terminus: Glutamyl-tRNA reductase (436 aa).

Substrate-binding positions include 49–52 (TCNR), serine 109, 114–116 (EGQ), and glutamine 120. The Nucleophile role is filled by cysteine 50. 198–203 (GAGRMS) provides a ligand contact to NADP(+).

Belongs to the glutamyl-tRNA reductase family. Homodimer.

The enzyme catalyses (S)-4-amino-5-oxopentanoate + tRNA(Glu) + NADP(+) = L-glutamyl-tRNA(Glu) + NADPH + H(+). Its pathway is porphyrin-containing compound metabolism; protoporphyrin-IX biosynthesis; 5-aminolevulinate from L-glutamyl-tRNA(Glu): step 1/2. It participates in porphyrin-containing compound metabolism; chlorophyll biosynthesis. Catalyzes the NADPH-dependent reduction of glutamyl-tRNA(Glu) to glutamate 1-semialdehyde (GSA). The sequence is that of Glutamyl-tRNA reductase from Prochlorococcus marinus (strain MIT 9303).